A 366-amino-acid chain; its full sequence is Methylthioribose-1-phosphate isomerase (366 aa).

D260 (proton donor) is an active-site residue.

The protein belongs to the eIF-2B alpha/beta/delta subunits family. MtnA subfamily.

It is found in the cytoplasm. The protein localises to the nucleus. The enzyme catalyses 5-(methylsulfanyl)-alpha-D-ribose 1-phosphate = 5-(methylsulfanyl)-D-ribulose 1-phosphate. Its pathway is amino-acid biosynthesis; L-methionine biosynthesis via salvage pathway; L-methionine from S-methyl-5-thio-alpha-D-ribose 1-phosphate: step 1/6. In terms of biological role, catalyzes the interconversion of methylthioribose-1-phosphate (MTR-1-P) into methylthioribulose-1-phosphate (MTRu-1-P). The protein is Methylthioribose-1-phosphate isomerase of Caenorhabditis elegans.